The sequence spans 154 residues: RNA-binding protein PAB1135 (154 aa).

As to quaternary structure, homodimer in solution.

Functionally, in vitro, binds efficiently double-stranded RNAs in a non-sequence specific manner. The polypeptide is RNA-binding protein PAB1135 (Pyrococcus abyssi (strain GE5 / Orsay)).